The sequence spans 464 residues: MSTNGTLSKPEFPANAASKEYAASLDAADPFAGFREKFIIPSKANIASTKLAKPGLSSEPCIYFCGNSLGIQPKATQKYLEAQLDTWSSIGVCGHFTKIEDSPLKEWQNLAEQAAESMSKIVGAAPEEVAAMGTLTMNLHLLLASFFKPTATKRKILMDWKAFPSDHYAIESHLAWHHLDPKETMVLIGPDEGTYEIPTEKILSYIDQHADEAALILLPGIQYYTGQLFDIPKITEYAHSRGLIVGWDLAHAYANVPLKLHDWDVDFAAWCTYKYGNAGPGAMAGLFVHEKHGQVDYSEGEDAPKFRHRLTGWYGGDKSVRFKMDNKFKPIPGAGGYQISNPSAIDLACLCAALSVFDETSIAELRKKSVLMTAYLEYLLLKDTTDESRQFQIITPSDPAARGAQLSLLLKPGLLHKVAHRLQEAGIICDKREPGVVRVAPVPLYNTFTEIWMFVQQLKAALEG.

Residues leucine 135, threonine 136, 163 to 166 (FPSD), aspartate 248, histidine 251, and tyrosine 273 contribute to the pyridoxal 5'-phosphate site. N6-(pyridoxal phosphate)lysine is present on lysine 274. Residues tryptophan 313 and asparagine 341 each contribute to the pyridoxal 5'-phosphate site.

The protein belongs to the kynureninase family. In terms of assembly, homodimer. It depends on pyridoxal 5'-phosphate as a cofactor.

The protein resides in the cytoplasm. The enzyme catalyses L-kynurenine + H2O = anthranilate + L-alanine + H(+). It catalyses the reaction 3-hydroxy-L-kynurenine + H2O = 3-hydroxyanthranilate + L-alanine + H(+). It functions in the pathway amino-acid degradation; L-kynurenine degradation; L-alanine and anthranilate from L-kynurenine: step 1/1. The protein operates within cofactor biosynthesis; NAD(+) biosynthesis; quinolinate from L-kynurenine: step 2/3. In terms of biological role, catalyzes the cleavage of L-kynurenine (L-Kyn) and L-3-hydroxykynurenine (L-3OHKyn) into anthranilic acid (AA) and 3-hydroxyanthranilic acid (3-OHAA), respectively. This is Kynureninase 2 (bna5-2) from Aspergillus fumigatus (strain CBS 144.89 / FGSC A1163 / CEA10) (Neosartorya fumigata).